The following is a 443-amino-acid chain: Tol-Pal system protein TolB (443 aa).

The signal sequence occupies residues methionine 1–alanine 33.

Belongs to the TolB family. The Tol-Pal system is composed of five core proteins: the inner membrane proteins TolA, TolQ and TolR, the periplasmic protein TolB and the outer membrane protein Pal. They form a network linking the inner and outer membranes and the peptidoglycan layer.

The protein resides in the periplasm. Functionally, part of the Tol-Pal system, which plays a role in outer membrane invagination during cell division and is important for maintaining outer membrane integrity. The protein is Tol-Pal system protein TolB of Brucella canis (strain ATCC 23365 / NCTC 10854 / RM-666).